A 471-amino-acid polypeptide reads, in one-letter code: Trigger factor (471 aa).

The 88-residue stretch at 174–261 folds into the PPIase FKBP-type domain; that stretch reads GDVAVVSFEG…VKDLKTRELP (88 aa). Residues 436-446 are compositionally biased toward polar residues; that stretch reads ETLPKTKSLNG. The interval 436 to 471 is disordered; sequence ETLPKTKSLNGKPSTQGKTSQSKSKKTKTKVEKTTK. Residues 447-457 are compositionally biased toward low complexity; sequence KPSTQGKTSQS.

This sequence belongs to the FKBP-type PPIase family. Tig subfamily.

The protein resides in the cytoplasm. The catalysed reaction is [protein]-peptidylproline (omega=180) = [protein]-peptidylproline (omega=0). Its function is as follows. Involved in protein export. Acts as a chaperone by maintaining the newly synthesized protein in an open conformation. Functions as a peptidyl-prolyl cis-trans isomerase. This Prochlorococcus marinus (strain MIT 9211) protein is Trigger factor.